A 352-amino-acid polypeptide reads, in one-letter code: Phosphatidylglycerol--prolipoprotein diacylglyceryl transferase (352 aa).

Transmembrane regions (helical) follow at residues 20–40 (WYGLSYMMGFICAYILITWLA), 55–75 (FITYAAIGTLVGGRLGYVLFY), 97–117 (EGGMASHGGIIGIVIACLLYA), and 122–142 (VNSLYLLDLVAVTGPIGVFFG). Arg-143 is an a 1,2-diacyl-sn-glycero-3-phospho-(1'-sn-glycerol) binding site. The next 3 helical transmembrane spans lie at 248-268 (SQLFAAFGEGLLIFMFLFFLW), 275-295 (GFIAACFVLIYAVVRVVDEHF), and 314-334 (WLSLAMFVVGLILMVVWTRAA).

The protein belongs to the Lgt family.

It is found in the cell inner membrane. The catalysed reaction is L-cysteinyl-[prolipoprotein] + a 1,2-diacyl-sn-glycero-3-phospho-(1'-sn-glycerol) = an S-1,2-diacyl-sn-glyceryl-L-cysteinyl-[prolipoprotein] + sn-glycerol 1-phosphate + H(+). Its pathway is protein modification; lipoprotein biosynthesis (diacylglyceryl transfer). In terms of biological role, catalyzes the transfer of the diacylglyceryl group from phosphatidylglycerol to the sulfhydryl group of the N-terminal cysteine of a prolipoprotein, the first step in the formation of mature lipoproteins. In Bdellovibrio bacteriovorus (strain ATCC 15356 / DSM 50701 / NCIMB 9529 / HD100), this protein is Phosphatidylglycerol--prolipoprotein diacylglyceryl transferase.